The following is a 371-amino-acid chain: 4-hydroxybutyrate dehydrogenase (371 aa).

Residues 88-92 (GSVID), 126-130 (TTCGT), and K148 contribute to the NAD(+) site. 4 residues coordinate Fe cation: D182, H186, H253, and H267. Residue H267 participates in NAD(+) binding.

Belongs to the iron-containing alcohol dehydrogenase family. Homodimer. Fe(2+) is required as a cofactor. It depends on Cu(2+) as a cofactor.

The catalysed reaction is 4-hydroxybutanoate + NAD(+) = succinate semialdehyde + NADH + H(+). Inactivated by oxygen. In terms of biological role, involved in the anaerobic succinate degradation pathway. Catalyzes the interconversion of gamma-hydroxybutyrate (GHB) and succinic semialdehyde (SSA). This Clostridium kluyveri (strain ATCC 8527 / DSM 555 / NBRC 12016 / NCIMB 10680 / K1) protein is 4-hydroxybutyrate dehydrogenase.